Here is a 168-residue protein sequence, read N- to C-terminus: Small ribosomal subunit protein uS5 (168 aa).

The 64-residue stretch at 13-76 (LEENVVAINR…EDAKRKLITV (64 aa)) folds into the S5 DRBM domain.

This sequence belongs to the universal ribosomal protein uS5 family. Part of the 30S ribosomal subunit. Contacts proteins S4 and S8.

With S4 and S12 plays an important role in translational accuracy. Functionally, located at the back of the 30S subunit body where it stabilizes the conformation of the head with respect to the body. This Leuconostoc mesenteroides subsp. mesenteroides (strain ATCC 8293 / DSM 20343 / BCRC 11652 / CCM 1803 / JCM 6124 / NCDO 523 / NBRC 100496 / NCIMB 8023 / NCTC 12954 / NRRL B-1118 / 37Y) protein is Small ribosomal subunit protein uS5.